Here is an 89-residue protein sequence, read N- to C-terminus: Small ribosomal subunit protein uS15c (89 aa).

This sequence belongs to the universal ribosomal protein uS15 family. Part of the 30S ribosomal subunit.

Its subcellular location is the plastid. It is found in the chloroplast. The protein is Small ribosomal subunit protein uS15c (rps15) of Chloranthus spicatus (Chulantree).